We begin with the raw amino-acid sequence, 181 residues long: ATP synthase subunit delta (181 aa).

It belongs to the ATPase delta chain family. As to quaternary structure, F-type ATPases have 2 components, F(1) - the catalytic core - and F(0) - the membrane proton channel. F(1) has five subunits: alpha(3), beta(3), gamma(1), delta(1), epsilon(1). F(0) has three main subunits: a(1), b(2) and c(10-14). The alpha and beta chains form an alternating ring which encloses part of the gamma chain. F(1) is attached to F(0) by a central stalk formed by the gamma and epsilon chains, while a peripheral stalk is formed by the delta and b chains.

It is found in the cell membrane. Functionally, f(1)F(0) ATP synthase produces ATP from ADP in the presence of a proton or sodium gradient. F-type ATPases consist of two structural domains, F(1) containing the extramembraneous catalytic core and F(0) containing the membrane proton channel, linked together by a central stalk and a peripheral stalk. During catalysis, ATP synthesis in the catalytic domain of F(1) is coupled via a rotary mechanism of the central stalk subunits to proton translocation. In terms of biological role, this protein is part of the stalk that links CF(0) to CF(1). It either transmits conformational changes from CF(0) to CF(1) or is implicated in proton conduction. The protein is ATP synthase subunit delta of Bacillus pumilus (strain SAFR-032).